The following is a 122-amino-acid chain: Large ribosomal subunit protein uL14 (122 aa).

The protein belongs to the universal ribosomal protein uL14 family. In terms of assembly, part of the 50S ribosomal subunit. Forms a cluster with proteins L3 and L19. In the 70S ribosome, L14 and L19 interact and together make contacts with the 16S rRNA in bridges B5 and B8.

Its function is as follows. Binds to 23S rRNA. Forms part of two intersubunit bridges in the 70S ribosome. This is Large ribosomal subunit protein uL14 from Chlorobaculum parvum (strain DSM 263 / NCIMB 8327) (Chlorobium vibrioforme subsp. thiosulfatophilum).